We begin with the raw amino-acid sequence, 180 residues long: dCTP deaminase, dUMP-forming (180 aa).

Residues 96–101, Asp-113, 121–123, Gln-142, Tyr-156, and Gln-163 each bind dCTP; these read RSSLGR and TLE. The Proton donor/acceptor role is filled by Glu-123.

Belongs to the dCTP deaminase family. Homotrimer.

It carries out the reaction dCTP + 2 H2O = dUMP + NH4(+) + diphosphate. It participates in pyrimidine metabolism; dUMP biosynthesis; dUMP from dCTP: step 1/1. Bifunctional enzyme that catalyzes both the deamination of dCTP to dUTP and the hydrolysis of dUTP to dUMP without releasing the toxic dUTP intermediate. The polypeptide is dCTP deaminase, dUMP-forming (Aquifex aeolicus (strain VF5)).